An 84-amino-acid chain; its full sequence is MSSGGLLLLLGLLTLWAELTPISGHDRPKFCYLPADPGECMAYIRSFYYDSESKKCKEFIYGGCHGNANNFPTRDKCRQTCRGK.

Positions 1–24 (MSSGGLLLLLGLLTLWAELTPISG) are cleaved as a signal peptide. Residues 31–81 (CYLPADPGECMAYIRSFYYDSESKKCKEFIYGGCHGNANNFPTRDKCRQTC) enclose the BPTI/Kunitz inhibitor domain. Intrachain disulfides connect C31/C81, C40/C64, and C56/C77.

It belongs to the venom Kunitz-type family. Expressed by the venom gland.

It is found in the secreted. In terms of biological role, serine protease inhibitor. This Daboia siamensis (Eastern Russel's viper) protein is Kunitz-type serine protease inhibitor C3.